The following is a 199-amino-acid chain: HTH-type transcriptional repressor NemR (199 aa).

Positions 7-67 (HDTREHLLAT…AMLERHYAAY (61 aa)) constitute an HTH tetR-type domain. The H-T-H motif DNA-binding region spans 30–49 (GLSELLKTAEVPKGSFYHYF).

In terms of biological role, involved in response to both electrophiles and reactive chlorine species (RCS). Represses the transcription of the nemRA-gloA operon by binding to the NemR box. This is HTH-type transcriptional repressor NemR (nemR) from Escherichia coli O6:H1 (strain CFT073 / ATCC 700928 / UPEC).